Consider the following 247-residue polypeptide: 7-cyano-7-deazaguanine synthase (247 aa).

21-31 lines the ATP pocket; the sequence is FSGGQDSTACL. 4 residues coordinate Zn(2+): Cys-209, Cys-224, Cys-227, and Cys-230.

Belongs to the QueC family. Requires Zn(2+) as cofactor.

The catalysed reaction is 7-carboxy-7-deazaguanine + NH4(+) + ATP = 7-cyano-7-deazaguanine + ADP + phosphate + H2O + H(+). It functions in the pathway purine metabolism; 7-cyano-7-deazaguanine biosynthesis. Catalyzes the ATP-dependent conversion of 7-carboxy-7-deazaguanine (CDG) to 7-cyano-7-deazaguanine (preQ(0)). This chain is 7-cyano-7-deazaguanine synthase, found in Halorhodospira halophila (strain DSM 244 / SL1) (Ectothiorhodospira halophila (strain DSM 244 / SL1)).